The following is a 443-amino-acid chain: Ribulose bisphosphate carboxylase large chain (443 aa).

An N6,N6,N6-trimethyllysine modification is found at Lys3. Residues Asn112 and Thr162 each coordinate substrate. Lys164 functions as the Proton acceptor in the catalytic mechanism. Lys166 is a substrate binding site. Mg(2+) contacts are provided by Lys190, Asp192, and Glu193. The residue at position 190 (Lys190) is an N6-carboxylysine. Residue His283 is the Proton acceptor of the active site. Positions 284, 316, and 368 each coordinate substrate.

The protein belongs to the RuBisCO large chain family. Type I subfamily. Heterohexadecamer of 8 large chains and 8 small chains; disulfide-linked. The disulfide link is formed within the large subunit homodimers. Requires Mg(2+) as cofactor. Post-translationally, the disulfide bond which can form in the large chain dimeric partners within the hexadecamer appears to be associated with oxidative stress and protein turnover.

The protein resides in the plastid. It localises to the chloroplast. The catalysed reaction is 2 (2R)-3-phosphoglycerate + 2 H(+) = D-ribulose 1,5-bisphosphate + CO2 + H2O. It catalyses the reaction D-ribulose 1,5-bisphosphate + O2 = 2-phosphoglycolate + (2R)-3-phosphoglycerate + 2 H(+). Functionally, ruBisCO catalyzes two reactions: the carboxylation of D-ribulose 1,5-bisphosphate, the primary event in carbon dioxide fixation, as well as the oxidative fragmentation of the pentose substrate in the photorespiration process. Both reactions occur simultaneously and in competition at the same active site. The protein is Ribulose bisphosphate carboxylase large chain of Iris germanica (Bearded iris).